We begin with the raw amino-acid sequence, 186 residues long: Small ribosomal subunit protein uS4 (186 aa).

The 65-residue stretch at 106–170 (RRLQTIVYRK…SPLKDEDHPI (65 aa)) folds into the S4 RNA-binding domain. Residues 151-186 (EEEEVDYSPYSPLKDEDHPIRCEARGESPEETAAEE) are disordered. Over residues 163 to 178 (LKDEDHPIRCEARGES) the composition is skewed to basic and acidic residues.

This sequence belongs to the universal ribosomal protein uS4 family. Part of the 30S ribosomal subunit. Contacts protein S5. The interaction surface between S4 and S5 is involved in control of translational fidelity.

Functionally, one of the primary rRNA binding proteins, it binds directly to 16S rRNA where it nucleates assembly of the body of the 30S subunit. Its function is as follows. With S5 and S12 plays an important role in translational accuracy. The polypeptide is Small ribosomal subunit protein uS4 (Methanopyrus kandleri (strain AV19 / DSM 6324 / JCM 9639 / NBRC 100938)).